Consider the following 48-residue polypeptide: Large ribosomal subunit protein eL40 (48 aa).

Belongs to the eukaryotic ribosomal protein eL40 family.

The polypeptide is Large ribosomal subunit protein eL40 (Methanosphaerula palustris (strain ATCC BAA-1556 / DSM 19958 / E1-9c)).